The sequence spans 177 residues: ATP-dependent protease subunit HslV (177 aa).

Residue Thr-5 is part of the active site. Na(+) is bound by residues Gly-161, Cys-164, and Thr-167.

It belongs to the peptidase T1B family. HslV subfamily. A double ring-shaped homohexamer of HslV is capped on each side by a ring-shaped HslU homohexamer. The assembly of the HslU/HslV complex is dependent on binding of ATP.

The protein resides in the cytoplasm. It catalyses the reaction ATP-dependent cleavage of peptide bonds with broad specificity.. With respect to regulation, allosterically activated by HslU binding. Protease subunit of a proteasome-like degradation complex believed to be a general protein degrading machinery. The chain is ATP-dependent protease subunit HslV from Campylobacter concisus (strain 13826).